The sequence spans 87 residues: UPF0213 protein SSA_0709 (87 aa).

A GIY-YIG domain is found at 3 to 78 (NKAYMYVLEC…KKKTRQAKLA (76 aa)).

It belongs to the UPF0213 family.

The chain is UPF0213 protein SSA_0709 from Streptococcus sanguinis (strain SK36).